Here is a 298-residue protein sequence, read N- to C-terminus: GTP cyclohydrolase FolE2 (298 aa).

It belongs to the GTP cyclohydrolase IV family.

It catalyses the reaction GTP + H2O = 7,8-dihydroneopterin 3'-triphosphate + formate + H(+). It functions in the pathway cofactor biosynthesis; 7,8-dihydroneopterin triphosphate biosynthesis; 7,8-dihydroneopterin triphosphate from GTP: step 1/1. Its function is as follows. Converts GTP to 7,8-dihydroneopterin triphosphate. The sequence is that of GTP cyclohydrolase FolE2 from Pseudomonas aeruginosa (strain UCBPP-PA14).